Here is a 436-residue protein sequence, read N- to C-terminus: Hydrogenobyrinate a,c-diamide synthase (436 aa).

One can recognise a GATase cobBQ-type domain in the interval 244 to 435 (RIAVARDDAF…MHVIDFSGEA (192 aa)). The active-site Nucleophile is C327.

This sequence belongs to the CobB/CbiA family. Mg(2+) is required as a cofactor.

The catalysed reaction is hydrogenobyrinate + 2 L-glutamine + 2 ATP + 2 H2O = hydrogenobyrinate a,c-diamide + 2 L-glutamate + 2 ADP + 2 phosphate + 2 H(+). The protein operates within cofactor biosynthesis; adenosylcobalamin biosynthesis; cob(II)yrinate a,c-diamide from precorrin-2 (aerobic route): step 9/10. Catalyzes the ATP-dependent amidation of the two carboxylate groups at positions a and c of hydrogenobyrinate, using either L-glutamine or ammonia as the nitrogen source. The sequence is that of Hydrogenobyrinate a,c-diamide synthase from Brucella abortus biovar 1 (strain 9-941).